Reading from the N-terminus, the 120-residue chain is Ribonuclease P protein component (120 aa).

Belongs to the RnpA family. Consists of a catalytic RNA component (M1 or rnpB) and a protein subunit.

The enzyme catalyses Endonucleolytic cleavage of RNA, removing 5'-extranucleotides from tRNA precursor.. Functionally, RNaseP catalyzes the removal of the 5'-leader sequence from pre-tRNA to produce the mature 5'-terminus. It can also cleave other RNA substrates such as 4.5S RNA. The protein component plays an auxiliary but essential role in vivo by binding to the 5'-leader sequence and broadening the substrate specificity of the ribozyme. This chain is Ribonuclease P protein component, found in Acidothermus cellulolyticus (strain ATCC 43068 / DSM 8971 / 11B).